A 351-amino-acid polypeptide reads, in one-letter code: dTDP-glucose 4,6-dehydratase (351 aa).

Residues 12–13 (FI), 32–35 (DALT), 58–59 (DI), 80–84 (FAAES), and T99 contribute to the NAD(+) site. S84 is a binding site for substrate. T133 is a substrate binding site. D134 (proton donor) is an active-site residue. Catalysis depends on proton acceptor residues E135 and Y158. 158–162 (YSASK) serves as a coordination point for NAD(+). N187 is a binding site for substrate. Residue N188 participates in NAD(+) binding. Substrate-binding positions include 197 to 198 (KL), 213 to 215 (PVY), R222, N257, and 289 to 293 (DRPGH).

It belongs to the NAD(P)-dependent epimerase/dehydratase family. dTDP-glucose dehydratase subfamily. In terms of assembly, homodimer. NAD(+) serves as cofactor.

It carries out the reaction dTDP-alpha-D-glucose = dTDP-4-dehydro-6-deoxy-alpha-D-glucose + H2O. Its pathway is carbohydrate biosynthesis; dTDP-L-rhamnose biosynthesis. The protein operates within bacterial outer membrane biogenesis; LPS O-antigen biosynthesis. In terms of biological role, catalyzes the dehydration of dTDP-D-glucose to form dTDP-6-deoxy-D-xylo-4-hexulose via a three-step process involving oxidation, dehydration and reduction. The sequence is that of dTDP-glucose 4,6-dehydratase (rfbB) from Xanthomonas campestris pv. campestris (strain B100).